A 259-amino-acid polypeptide reads, in one-letter code: Pyrroloquinoline-quinone synthase (259 aa).

Belongs to the PqqC family.

The enzyme catalyses 6-(2-amino-2-carboxyethyl)-7,8-dioxo-1,2,3,4,7,8-hexahydroquinoline-2,4-dicarboxylate + 3 O2 = pyrroloquinoline quinone + 2 H2O2 + 2 H2O + H(+). It participates in cofactor biosynthesis; pyrroloquinoline quinone biosynthesis. Ring cyclization and eight-electron oxidation of 3a-(2-amino-2-carboxyethyl)-4,5-dioxo-4,5,6,7,8,9-hexahydroquinoline-7,9-dicarboxylic-acid to PQQ. The sequence is that of Pyrroloquinoline-quinone synthase from Bradyrhizobium sp. (strain ORS 278).